Here is a 260-residue protein sequence, read N- to C-terminus: Histidinol-phosphatase (260 aa).

Residues glutamate 67, aspartate 83, isoleucine 85, and aspartate 86 each contribute to the Mg(2+) site. Glutamate 67 provides a ligand contact to substrate. Substrate is bound by residues 85–88 (IDGT), arginine 185, and aspartate 213. Mg(2+) is bound at residue aspartate 213.

It belongs to the inositol monophosphatase superfamily. Mg(2+) serves as cofactor.

It carries out the reaction L-histidinol phosphate + H2O = L-histidinol + phosphate. It functions in the pathway amino-acid biosynthesis; L-histidine biosynthesis; L-histidine from 5-phospho-alpha-D-ribose 1-diphosphate: step 8/9. Functionally, catalyzes the dephosphorylation of histidinol-phosphate to histidinol, the direct precursor of histidine. The sequence is that of Histidinol-phosphatase (hisN) from Mycobacterium tuberculosis (strain ATCC 25618 / H37Rv).